The chain runs to 318 residues: 2-keto-3-deoxygluconate permease (318 aa).

A run of 10 helical transmembrane segments spans residues 10-30, 42-62, 82-102, 109-129, 139-159, 163-183, 201-221, 224-244, 257-277, and 288-308; these read LPGGMMLVPLLLGALCHTLWP, GLISGTVPILAVWFFCMGATI, IAVAWLVAVVCAPLLPIGGIP, LSVLALVAAMDMTNGGLYAAL, AGAVVLMSLESGPLISMLILG, LATFEPQLFVGAVLPLLLGFA, TLVPFFGFALGNTLDLSTIVH, ASGVLLGVAVIVITGLPLLLA, VAASSTAGAAVATPALIAGMA, and TALVASAVIVTSVLVPLLTAL.

It belongs to the KdgT transporter family.

It localises to the cell inner membrane. It carries out the reaction 2-dehydro-3-deoxy-D-gluconate(in) + H(+)(in) = 2-dehydro-3-deoxy-D-gluconate(out) + H(+)(out). In terms of biological role, catalyzes the proton-dependent uptake of 2-keto-3-deoxygluconate (KDG) into the cell. The polypeptide is 2-keto-3-deoxygluconate permease (Xanthomonas oryzae pv. oryzae (strain MAFF 311018)).